Consider the following 590-residue polypeptide: Multidrug and toxin extrusion protein 1 (590 aa).

The Cytoplasmic portion of the chain corresponds to 1 to 59; that stretch reads MDSITSYNVTQMNGDTKQEKCDDVLSTSSTQKFCGGCRKKLRSLLPVNYKTEIVELLKL. Residues 60 to 80 form a helical membrane-spanning segment; the sequence is AGPVFISQLMIFLISFVSTVF. Over 81-88 the chain is Extracellular; sequence CGHLGKTE. Residues 89 to 109 form a helical membrane-spanning segment; it reads LAGVALAIAVINVTGISIGSG. The Cytoplasmic portion of the chain corresponds to 110–137; sequence LASACDTLISQTFGSNNLKRVGVILQRG. The helical transmembrane segment at 138-158 threads the bilayer; it reads ILILLLACFPCWALLINTEPI. The Extracellular portion of the chain corresponds to 159–167; it reads LLAVRQSPN. A helical transmembrane segment spans residues 168-188; it reads VASLSQLYVKIFMPALPAAFM. Residues 189 to 199 lie on the Cytoplasmic side of the membrane; it reads YQLQGRYLQNQ. Residues 200-222 traverse the membrane as a helical segment; sequence GIIWPQVITGAAGNILNALINYV. Residues 223-231 are Extracellular-facing; that stretch reads FLHLLELGV. A helical transmembrane segment spans residues 232–254; that stretch reads AGSAAANTISQYSLAVFLYVYIR. The Cytoplasmic segment spans residues 255 to 274; sequence WKNLHKATWDGWSRDCLQEW. Residues 275–294 form a helical membrane-spanning segment; the sequence is GAFIRLALPSMLMLCVEWWT. Over 295 to 313 the chain is Extracellular; it reads YEIGGFLAGLISETELGAQ. Residues 314–334 traverse the membrane as a helical segment; it reads SVVYELATIAYMFPLGFAVAA. Residues 335–351 are Cytoplasmic-facing; the sequence is SVRVGNALGAGNTERAK. Residues 352–372 traverse the membrane as a helical segment; it reads LSAKVALVCGVLVSCVVATLI. Over 373-395 the chain is Extracellular; the sequence is GCTKDVIAYIFTTEEEIVSRVSQ. Residues 396-416 traverse the membrane as a helical segment; it reads VMIMYGFFHLFDAIAGITGGI. Residues 417–430 lie on the Cytoplasmic side of the membrane; sequence VRGAGKQLLGALCN. Residues 431–451 form a helical membrane-spanning segment; the sequence is IVGYYFVGFPTGVSLMFALSM. Gly-452 is a topological domain (extracellular). A helical transmembrane segment spans residues 453-473; sequence IIGLWIGFFGCVFLQSLFFII. Residues 474 to 565 are Cytoplasmic-facing; that stretch reads LIYKLDWKKA…TTKQLIVRRG (92 aa). Residues 566–586 form a helical membrane-spanning segment; the sequence is LAVLLMVLILAGGIVLNEMLV. Residues 587–590 lie on the Extracellular side of the membrane; sequence RYLR.

Belongs to the multi antimicrobial extrusion (MATE) (TC 2.A.66.1) family.

The protein resides in the cell membrane. Solute transporter for tetraethylammonium (TEA), cimetidine, metformin, guanidine, N-methylnicotinamide (NMN) and also the zwitterionic cephalosporin cephalexin. Responsible for the secretion of cationic drugs across the brush border membranes. The chain is Multidrug and toxin extrusion protein 1 (slc47a1) from Danio rerio (Zebrafish).